A 191-amino-acid chain; its full sequence is UPF0149 protein VC_2476 (191 aa).

Belongs to the UPF0149 family.

The polypeptide is UPF0149 protein VC_2476 (Vibrio cholerae serotype O1 (strain ATCC 39315 / El Tor Inaba N16961)).